The chain runs to 342 residues: tRNA N6-adenosine threonylcarbamoyltransferase (342 aa).

Fe cation is bound by residues His-115 and His-119. Substrate-binding positions include 138–142 (IISGG), Asp-171, Gly-184, Asp-188, and Asn-276. Asp-304 is a Fe cation binding site.

This sequence belongs to the KAE1 / TsaD family. It depends on Fe(2+) as a cofactor.

It is found in the cytoplasm. The catalysed reaction is L-threonylcarbamoyladenylate + adenosine(37) in tRNA = N(6)-L-threonylcarbamoyladenosine(37) in tRNA + AMP + H(+). Required for the formation of a threonylcarbamoyl group on adenosine at position 37 (t(6)A37) in tRNAs that read codons beginning with adenine. Is involved in the transfer of the threonylcarbamoyl moiety of threonylcarbamoyl-AMP (TC-AMP) to the N6 group of A37, together with TsaE and TsaB. TsaD likely plays a direct catalytic role in this reaction. The sequence is that of tRNA N6-adenosine threonylcarbamoyltransferase from Endomicrobium trichonymphae.